We begin with the raw amino-acid sequence, 211 residues long: RNA chaperone ProQ (211 aa).

Positions 113-147 are disordered; that stretch reads RRAVEKANNPKANKKRSVYHSGNKSENKKSAGKKF.

Belongs to the ProQ family.

The protein localises to the cytoplasm. Functionally, RNA chaperone with significant RNA binding, RNA strand exchange and RNA duplexing activities. The chain is RNA chaperone ProQ from Histophilus somni (strain 129Pt) (Haemophilus somnus).